Here is a 339-residue protein sequence, read N- to C-terminus: Glycerol-3-phosphate dehydrogenase [NAD(P)+] (339 aa).

NADPH is bound by residues Ser15, Tyr16, His36, and Lys110. Lys110, Gly139, and Thr141 together coordinate sn-glycerol 3-phosphate. Ala143 provides a ligand contact to NADPH. Residues Lys195, Asp248, Ser258, Arg259, and Asn260 each coordinate sn-glycerol 3-phosphate. Residue Lys195 is the Proton acceptor of the active site. Arg259 contributes to the NADPH binding site. Val283 and Glu285 together coordinate NADPH.

It belongs to the NAD-dependent glycerol-3-phosphate dehydrogenase family.

The protein localises to the cytoplasm. It carries out the reaction sn-glycerol 3-phosphate + NAD(+) = dihydroxyacetone phosphate + NADH + H(+). The catalysed reaction is sn-glycerol 3-phosphate + NADP(+) = dihydroxyacetone phosphate + NADPH + H(+). It participates in membrane lipid metabolism; glycerophospholipid metabolism. Functionally, catalyzes the reduction of the glycolytic intermediate dihydroxyacetone phosphate (DHAP) to sn-glycerol 3-phosphate (G3P), the key precursor for phospholipid synthesis. This Escherichia fergusonii (strain ATCC 35469 / DSM 13698 / CCUG 18766 / IAM 14443 / JCM 21226 / LMG 7866 / NBRC 102419 / NCTC 12128 / CDC 0568-73) protein is Glycerol-3-phosphate dehydrogenase [NAD(P)+].